Here is a 425-residue protein sequence, read N- to C-terminus: MTKKHLTETRFADLALHPKIQQAISSAGFEYCTPIQALSLPVALSNRDVAGQAQTGTGKTLAFLLATFNRLMQNESSEKTESGPRALIMAPTRELAIQIAHDADALIEHCGLKMGVIYGGEGYEGQKEQLAAQPDILVGTTGRLIDFYKQDLFSLKDIEVVVLDEADRMFDLGFIDDIRYLLQKMPDPSKRLNLLFSATLSYRVQELAYEHMNAPTKLEVEPLQKTATRVTEELFYPSKPEKFPLLLTLIEEDWPDKAIVFANTKHGCEKVHGWLVANEHRAGLLTGDVPQKKRLRILEDFAEGKLDFLVATDVAARGLHIPEVTHVYNFDLPDDCEDYVHRIGRTGRAGASGAAISLACEEYVYNLPAIEDYIGHTIPVTKYDGDALLSDLRRPRPIQRRRRHNSGGGKGKPRGRRSGPPRNAS.

The short motif at 9–37 (TRFADLALHPKIQQAISSAGFEYCTPIQA) is the Q motif element. A Helicase ATP-binding domain is found at 40–218 (LPVALSNRDV…YEHMNAPTKL (179 aa)). 53–60 (AQTGTGKT) contributes to the ATP binding site. Residues 164–167 (DEAD) carry the DEAD box motif. A Helicase C-terminal domain is found at 242–389 (KFPLLLTLIE…VTKYDGDALL (148 aa)). The disordered stretch occupies residues 391 to 425 (DLRRPRPIQRRRRHNSGGGKGKPRGRRSGPPRNAS). The span at 395–419 (PRPIQRRRRHNSGGGKGKPRGRRSG) shows a compositional bias: basic residues.

It belongs to the DEAD box helicase family. RhlB subfamily. As to quaternary structure, component of the RNA degradosome, which is a multiprotein complex involved in RNA processing and mRNA degradation.

The protein localises to the cytoplasm. It catalyses the reaction ATP + H2O = ADP + phosphate + H(+). In terms of biological role, DEAD-box RNA helicase involved in RNA degradation. Has RNA-dependent ATPase activity and unwinds double-stranded RNA. The sequence is that of ATP-dependent RNA helicase RhlB from Idiomarina loihiensis (strain ATCC BAA-735 / DSM 15497 / L2-TR).